The following is a 993-amino-acid chain: Synaptonemal complex protein 1 (993 aa).

A Mediates head to head self-assembly of N-terminal ends motif is present at residues Pro-98–Lys-108. Residues Lys-114 to Lys-117 carry the Nuclear localization signal motif. 2 coiled-coil regions span residues Lys-117–Glu-172 and Ile-215–Asn-688. The interaction with SYCE3 stretch occupies residues Glu-203–Gln-359. Residues Gly-694–Glu-788 are required for pH-induced assembly of C-terminal ends into antiparallel tetramers. Residues Leu-697–Val-700 carry the Nuclear localization signal motif. A coiled-coil region spans residues Lys-764–Lys-808. Residues Asn-801–Ser-993 form a DNA-binding region. The residue at position 820 (Ser-820) is a Phosphoserine. Residues Thr-824–Ala-861 are disordered. The span at Lys-831–Ser-847 shows a compositional bias: polar residues. Positions Gly-848–Leu-857 are enriched in basic and acidic residues. The Nuclear localization signal signature appears at Lys-898–Lys-901.

As to quaternary structure, structural component of synaptonemal complexes. Homotetramer that consists of an N-terminal four-helical bundle that bifurcates into two elongated C-terminal dimeric coiled coils. This tetrameric building block potentially self-assembles into a supramolecular zipper-like lattice to mediate meiotic chromosome synapsis. Self-assembly is likely initiated by local proton density at chromosome axis, which is predicted to trigger antiparallel back to back assembly of adjacent C-terminal ends into tetrameric structures that anchor to chromosomal DNA. Then the N-terminal ends are predicted to undergo cooperative antiparallel head to head assembly at the midline of synaptonemal complexes central element to form a zipper-like lattice between properly aligned homologous chromosomes. The nascent synapsis generated by SYCP1 is stabilized through interaction with central element proteins SYCE1 and SYCE2. Interacts (via tetrameric core) with SYCE3; the interaction remodels SYCP1 homotetramers to 2:1 heterotrimers with SYCE3. SYCP1/SYCE3 heterotrimers form lattice assemblies as part of the mature synaptonemal complex via both lateral and head-to-head interactions. Forms a complex with EWSR1, PRDM9, SYCP3 and REC8; complex formation is dependent of phosphorylated form of REC8 and requires PRDM9 bound to hotspot DNA; EWSR1 joins PRDM9 with the chromosomal axis through REC8. Interacts with SPO16. In terms of tissue distribution, detected in testis. Detected in spermatocytes (at protein level).

It is found in the nucleus. The protein localises to the chromosome. Its subcellular location is the centromere. In terms of biological role, major component of the transverse filaments of synaptonemal complexes, formed between homologous chromosomes during meiotic prophase. Required for normal assembly of the central element of the synaptonemal complexes. Required for normal centromere pairing during meiosis. Required for normal meiotic chromosome synapsis during oocyte and spermatocyte development and for normal male and female fertility. This is Synaptonemal complex protein 1 from Mus musculus (Mouse).